The following is a 260-amino-acid chain: Triosephosphate isomerase (260 aa).

Residue 11–13 (NWK) participates in substrate binding. H103 serves as the catalytic Electrophile. The active-site Proton acceptor is E175. Substrate is bound by residues G181, S220, and 241–242 (GG).

Belongs to the triosephosphate isomerase family. Homodimer.

Its subcellular location is the cytoplasm. The catalysed reaction is D-glyceraldehyde 3-phosphate = dihydroxyacetone phosphate. It functions in the pathway carbohydrate biosynthesis; gluconeogenesis. The protein operates within carbohydrate degradation; glycolysis; D-glyceraldehyde 3-phosphate from glycerone phosphate: step 1/1. Involved in the gluconeogenesis. Catalyzes stereospecifically the conversion of dihydroxyacetone phosphate (DHAP) to D-glyceraldehyde-3-phosphate (G3P). This Shewanella halifaxensis (strain HAW-EB4) protein is Triosephosphate isomerase.